The chain runs to 159 residues: Small ribosomal subunit protein uS7 (159 aa).

It belongs to the universal ribosomal protein uS7 family. As to quaternary structure, part of the 30S ribosomal subunit. Contacts proteins S9 and S11.

In terms of biological role, one of the primary rRNA binding proteins, it binds directly to 16S rRNA where it nucleates assembly of the head domain of the 30S subunit. Is located at the subunit interface close to the decoding center, probably blocks exit of the E-site tRNA. The chain is Small ribosomal subunit protein uS7 from Wolbachia pipientis wMel.